The primary structure comprises 613 residues: Dihydroxy-acid dehydratase 3 (613 aa).

D81 is a binding site for Mg(2+). Residue C122 coordinates [2Fe-2S] cluster. Mg(2+)-binding residues include D123 and K124. An N6-carboxylysine modification is found at K124. [2Fe-2S] cluster is bound at residue C197. Residue E493 coordinates Mg(2+). S519 (proton acceptor) is an active-site residue.

The protein belongs to the IlvD/Edd family. As to quaternary structure, homodimer. The cofactor is [2Fe-2S] cluster. Mg(2+) serves as cofactor.

The catalysed reaction is (2R)-2,3-dihydroxy-3-methylbutanoate = 3-methyl-2-oxobutanoate + H2O. The enzyme catalyses (2R,3R)-2,3-dihydroxy-3-methylpentanoate = (S)-3-methyl-2-oxopentanoate + H2O. It participates in amino-acid biosynthesis; L-isoleucine biosynthesis; L-isoleucine from 2-oxobutanoate: step 3/4. Its pathway is amino-acid biosynthesis; L-valine biosynthesis; L-valine from pyruvate: step 3/4. Its function is as follows. Functions in the biosynthesis of branched-chain amino acids. Catalyzes the dehydration of (2R,3R)-2,3-dihydroxy-3-methylpentanoate (2,3-dihydroxy-3-methylvalerate) into 2-oxo-3-methylpentanoate (2-oxo-3-methylvalerate) and of (2R)-2,3-dihydroxy-3-methylbutanoate (2,3-dihydroxyisovalerate) into 2-oxo-3-methylbutanoate (2-oxoisovalerate), the penultimate precursor to L-isoleucine and L-valine, respectively. This Nocardia farcinica (strain IFM 10152) protein is Dihydroxy-acid dehydratase 3.